The following is a 565-amino-acid chain: FAD-linked oxidoreductase ZEB1 (565 aa).

A signal peptide spans 1–27 (MKLSPSKYLPVLLGTLSLTIANPSADC). N-linked (GlcNAc...) asparagine glycans are attached at residues Asn46, Asn82, and Asn100. One can recognise an FAD-binding PCMH-type domain in the interval 115-293 (LGNYVSYAIA…ISMTVKAHPG (179 aa)). N-linked (GlcNAc...) asparagine glycans are attached at residues Asn340, Asn352, and Asn421.

It belongs to the oxygen-dependent FAD-linked oxidoreductase family.

It functions in the pathway mycotoxin biosynthesis. In terms of biological role, FAD-linked oxidoreductase; part of the gene cluster that mediates the biosynthesis of zearalenone (ZEA), a nonsteroid estrogen that is a contaminant of cereal grains and causes estrogenic disorders in humans and animals. The ZEA backbone is synthesized from a single acetyl-CoA molecule and eight malonyl-CoA molecules. The reducing polyketide synthase ZEA2 is proposed to synthesize a reduced hexaketide intermediate by using different combinations of its reductive domains during each round of condensation. The hexaketide thioester is then transacylated to the non-reducing polyketide synthase ZEA1 and is further condensed with three malonyl-CoAs without reductive tailoring to yield a mixed reduced/unreduced nonaketide. ZEA1 must be able to interact with ZEA2 to facilitate starter-unit acyltransfer and initiate polyketide biosynthesis. ZEA1 also mediates the required C2-C7 cyclization to form the resorcylate core and catalyzes the formation of the macrolactone. ZEB1 is then responsible for the chemical conversion of beta-zearalenonol (beta-ZOL) to ZEA in the biosynthetic pathway. This Gibberella zeae (strain ATCC MYA-4620 / CBS 123657 / FGSC 9075 / NRRL 31084 / PH-1) (Wheat head blight fungus) protein is FAD-linked oxidoreductase ZEB1.